Here is a 645-residue protein sequence, read N- to C-terminus: Translation factor GUF1, mitochondrial (645 aa).

In terms of domain architecture, tr-type G spans 44–228 (ENYRNFSIVA…AIIDRIPPPT (185 aa)). Residues 53 to 60 (AHVDHGKS), 120 to 124 (DTPGH), and 174 to 177 (NKID) each bind GTP.

It belongs to the TRAFAC class translation factor GTPase superfamily. Classic translation factor GTPase family. LepA subfamily.

It is found in the mitochondrion inner membrane. The catalysed reaction is GTP + H2O = GDP + phosphate + H(+). Promotes mitochondrial protein synthesis. May act as a fidelity factor of the translation reaction, by catalyzing a one-codon backward translocation of tRNAs on improperly translocated ribosomes. Binds to mitochondrial ribosomes in a GTP-dependent manner. This chain is Translation factor GUF1, mitochondrial, found in Saccharomyces cerevisiae (strain ATCC 204508 / S288c) (Baker's yeast).